A 302-amino-acid polypeptide reads, in one-letter code: tRNA-cytidine(32) 2-sulfurtransferase (302 aa).

Positions 44–49 (SGGKDS) match the PP-loop motif motif. 3 residues coordinate [4Fe-4S] cluster: Cys119, Cys122, and Cys210.

Belongs to the TtcA family. In terms of assembly, homodimer. The cofactor is Mg(2+). It depends on [4Fe-4S] cluster as a cofactor.

The protein resides in the cytoplasm. The catalysed reaction is cytidine(32) in tRNA + S-sulfanyl-L-cysteinyl-[cysteine desulfurase] + AH2 + ATP = 2-thiocytidine(32) in tRNA + L-cysteinyl-[cysteine desulfurase] + A + AMP + diphosphate + H(+). It functions in the pathway tRNA modification. Its function is as follows. Catalyzes the ATP-dependent 2-thiolation of cytidine in position 32 of tRNA, to form 2-thiocytidine (s(2)C32). The sulfur atoms are provided by the cysteine/cysteine desulfurase (IscS) system. This chain is tRNA-cytidine(32) 2-sulfurtransferase, found in Tolumonas auensis (strain DSM 9187 / NBRC 110442 / TA 4).